A 39-amino-acid chain; its full sequence is MKKQRNPHLISKNYKGIPIGFNLNLNRTAIKRIQDTREK.

This is an uncharacterized protein from Dictyostelium discoideum (Social amoeba).